The chain runs to 833 residues: Heat shock transcription factor (833 aa).

M1 is subject to N-acetylmethionine. A compositionally biased stretch (polar residues) spans 1 to 16; sequence MNNAANTGTTNESNVS. Disordered stretches follow at residues 1 to 31 and 62 to 92; these read MNNA…NDDD and NPSL…STHL. A compositionally biased stretch (low complexity) spans 69–80; it reads SAASPVPSSSFF. Phosphothreonine is present on T97. Over residues 150–161 the composition is skewed to polar residues; the sequence is PSSGTTNAQPRQ. Disordered stretches follow at residues 150–170 and 277–309; these read PSSG…QSHK and GSSN…NNSN. Residues 170 to 259 mediate DNA binding; that stretch reads KSRPAFVNKL…SDDKWQFENE (90 aa). Residues 260-280 form a flexible linker region; sequence NFIRGREDLLEKIIRQKGSSN. Residues 277–296 are compositionally biased toward low complexity; sequence GSSNNHNSPSGNGNPANGSN. An involved in trimerization region spans residues 350 to 403; sequence ELEQIKYNQIAISKDLLRINKDNELLWQENMMARERHRTQQQALEKMFRFLTSI. The segment covering 447-457 has biased composition (basic and acidic residues); the sequence is SNDSFINDDRN. The interval 447–493 is disordered; it reads SNDSFINDDRNSFTNATTNARNNMSPNNDDNSIDTASTNTTNRKKNI. Residues S450, S458, S471, S478, and S528 each carry the phosphoserine modification. A compositionally biased stretch (polar residues) spans 458–487; the sequence is SFTNATTNARNNMSPNNDDNSIDTASTNTT. Positions 542–554 are enriched in polar residues; it reads RANSSTSSENPSL. Disordered regions lie at residues 542–626, 657–765, and 778–799; these read RANS…HNES, GYPN…RVSP, and SDNL…APEN. Residues 571-580 are compositionally biased toward acidic residues; that stretch reads PFDDEEEEET. A compositionally biased stretch (polar residues) spans 588-600; the sequence is RDPNNQTSENTFD. The segment covering 610–626 has biased composition (basic and acidic residues); sequence DDLKKDSHTNDNKHNES. Residues 660–675 are compositionally biased toward low complexity; sequence NKSFNNKTSSTNTNSN. Residues 676–687 show a composition bias toward polar residues; sequence MESAVNVNSPGF. Over residues 697-713 the composition is skewed to low complexity; it reads SNSPNSVHSVPSNGSGS. Composition is skewed to polar residues over residues 727-739, 752-763, and 778-794; these read ASTS…NGSG, NDNNTSEGSTRV, and SDNL…TQAD.

The protein belongs to the HSF family. Homotrimer. Homotrimerization increases the affinity of HSF1 to DNA. Exhibits temperature-dependent phosphorylation that activates the transcriptional capacity.

It localises to the nucleus. Functionally, DNA-binding transcription factor that specifically binds heat shock promoter elements (HSE) and activates transcription. The chain is Heat shock transcription factor from Saccharomyces cerevisiae (strain ATCC 204508 / S288c) (Baker's yeast).